A 600-amino-acid polypeptide reads, in one-letter code: Prostaglandin G/H synthase 1 (600 aa).

The N-terminal stretch at 1–24 (MSRQSISLRFPLLLLLLSPSPVFS) is a signal peptide. In terms of domain architecture, EGF-like spans 32–70 (PVNPCCYYPCQHQGICVRFGLDRYQCDCTRTGYSGPNCT). Disulfide bonds link C36–C47, C37–C159, C41–C57, and C59–C69. The N-linked (GlcNAc...) asparagine glycan is linked to N68. The next 4 membrane-spanning stretches (helical) occupy residues 74 to 82 (IWTWLRTTL), 86 to 92 (PSFIHFL), 97 to 105 (RWLWDFVNA), and 108 to 122 (IRDT…VRSN). An N-linked (GlcNAc...) asparagine glycan is attached at N144. The Proton acceptor role is filled by H207. Y385 acts as the For cyclooxygenase activity in catalysis. H388 serves as a coordination point for heme b. N410 carries N-linked (GlcNAc...) asparagine glycosylation. C569 and C575 are joined by a disulfide.

It belongs to the prostaglandin G/H synthase family. Homodimer. The cofactor is heme b.

It localises to the endoplasmic reticulum membrane. Its subcellular location is the microsome membrane. It carries out the reaction (5Z,8Z,11Z,14Z)-eicosatetraenoate + AH2 + 2 O2 = prostaglandin H2 + A + H2O. The catalysed reaction is (5Z,8Z,11Z,14Z)-eicosatetraenoate + 2 O2 = prostaglandin G2. The enzyme catalyses prostaglandin G2 + AH2 = prostaglandin H2 + A + H2O. It catalyses the reaction (9Z,12Z)-octadecadienoate + AH2 + O2 = (9R)-hydroxy-(10E,12Z)-octadecadienoate + A + H2O. It carries out the reaction (9Z,12Z)-octadecadienoate + AH2 + O2 = (9S)-hydroxy-(10E,12Z)-octadecadienoate + A + H2O. The catalysed reaction is (9Z,12Z)-octadecadienoate + AH2 + O2 = (13S)-hydroxy-(9Z,11E)-octadecadienoate + A + H2O. The enzyme catalyses (9Z,12Z)-octadecadienoate + AH2 + O2 = (13R)-hydroxy-(9Z,11E)-octadecadienoate + A + H2O. Its pathway is lipid metabolism; prostaglandin biosynthesis. Its activity is regulated as follows. The cyclooxygenase activity is inhibited by nonsteroidal anti-inflammatory drugs (NSAIDs) including ibuprofen, flurbiprofen, ketoprofen, naproxen, flurbiprofen, anirolac, fenclofenac and diclofenac. In terms of biological role, dual cyclooxygenase and peroxidase that plays an important role in the biosynthesis pathway of prostanoids, a class of C20 oxylipins mainly derived from arachidonate ((5Z,8Z,11Z,14Z)-eicosatetraenoate, AA, C20:4(n-6)), with a particular role in the inflammatory response. The cyclooxygenase activity oxygenates AA to the hydroperoxy endoperoxide prostaglandin G2 (PGG2), and the peroxidase activity reduces PGG2 to the hydroxy endoperoxide prostaglandin H2 (PGH2), the precursor of all 2-series prostaglandins and thromboxanes. This complex transformation is initiated by abstraction of hydrogen at carbon 13 (with S-stereochemistry), followed by insertion of molecular O2 to form the endoperoxide bridge between carbon 9 and 11 that defines prostaglandins. The insertion of a second molecule of O2 (bis-oxygenase activity) yields a hydroperoxy group in PGG2 that is then reduced to PGH2 by two electrons. Involved in the constitutive production of prostanoids in particular in the stomach and platelets. In gastric epithelial cells, it is a key step in the generation of prostaglandins, such as prostaglandin E2 (PGE2), which plays an important role in cytoprotection. In platelets, it is involved in the generation of thromboxane A2 (TXA2), which promotes platelet activation and aggregation, vasoconstriction and proliferation of vascular smooth muscle cells. Can also use linoleate (LA, (9Z,12Z)-octadecadienoate, C18:2(n-6)) as substrate and produce hydroxyoctadecadienoates (HODEs) in a regio- and stereospecific manner, being (9R)-HODE ((9R)-hydroxy-(10E,12Z)-octadecadienoate) and (13S)-HODE ((13S)-hydroxy-(9Z,11E)-octadecadienoate) its major products. This chain is Prostaglandin G/H synthase 1 (PTGS1), found in Ovis aries (Sheep).